Reading from the N-terminus, the 321-residue chain is Probable endolytic peptidoglycan transglycosylase RlpA (321 aa).

The protein belongs to the RlpA family.

In terms of biological role, lytic transglycosylase with a strong preference for naked glycan strands that lack stem peptides. This chain is Probable endolytic peptidoglycan transglycosylase RlpA, found in Synechocystis sp. (strain ATCC 27184 / PCC 6803 / Kazusa).